Here is a 117-residue protein sequence, read N- to C-terminus: Large ribosomal subunit protein eL8 (117 aa).

It belongs to the eukaryotic ribosomal protein eL8 family. Part of the 50S ribosomal subunit. Probably part of the RNase P complex.

It is found in the cytoplasm. In terms of biological role, multifunctional RNA-binding protein that recognizes the K-turn motif in ribosomal RNA, the RNA component of RNase P, box H/ACA, box C/D and box C'/D' sRNAs. The sequence is that of Large ribosomal subunit protein eL8 from Methanocaldococcus jannaschii (strain ATCC 43067 / DSM 2661 / JAL-1 / JCM 10045 / NBRC 100440) (Methanococcus jannaschii).